We begin with the raw amino-acid sequence, 669 residues long: DNA ligase (669 aa).

NAD(+) contacts are provided by residues 34–38 (DAEYD), 83–84 (SL), and Glu-114. Catalysis depends on Lys-116, which acts as the N6-AMP-lysine intermediate. Residues Arg-137, Glu-171, Lys-287, and Lys-311 each contribute to the NAD(+) site. Residues Cys-405, Cys-408, Cys-423, and Cys-428 each contribute to the Zn(2+) site. The region spanning 591 to 669 (NVESYFAGKT…EERFLQELNK (79 aa)) is the BRCT domain.

It belongs to the NAD-dependent DNA ligase family. LigA subfamily. Requires Mg(2+) as cofactor. It depends on Mn(2+) as a cofactor.

It carries out the reaction NAD(+) + (deoxyribonucleotide)n-3'-hydroxyl + 5'-phospho-(deoxyribonucleotide)m = (deoxyribonucleotide)n+m + AMP + beta-nicotinamide D-nucleotide.. DNA ligase that catalyzes the formation of phosphodiester linkages between 5'-phosphoryl and 3'-hydroxyl groups in double-stranded DNA using NAD as a coenzyme and as the energy source for the reaction. It is essential for DNA replication and repair of damaged DNA. In Bacillus cereus (strain G9842), this protein is DNA ligase.